The chain runs to 295 residues: Diaminopimelate epimerase (295 aa).

Asn-13, Gln-46, and Asn-66 together coordinate substrate. Cys-75 acts as the Proton donor in catalysis. Substrate-binding positions include 76–77 (GN), Asn-162, Asn-195, and 213–214 (ER). Cys-222 serves as the catalytic Proton acceptor. A substrate-binding site is contributed by 223-224 (GT).

Belongs to the diaminopimelate epimerase family. In terms of assembly, homodimer.

It is found in the cytoplasm. The enzyme catalyses (2S,6S)-2,6-diaminopimelate = meso-2,6-diaminopimelate. The protein operates within amino-acid biosynthesis; L-lysine biosynthesis via DAP pathway; DL-2,6-diaminopimelate from LL-2,6-diaminopimelate: step 1/1. In terms of biological role, catalyzes the stereoinversion of LL-2,6-diaminopimelate (L,L-DAP) to meso-diaminopimelate (meso-DAP), a precursor of L-lysine and an essential component of the bacterial peptidoglycan. This chain is Diaminopimelate epimerase, found in Psychrobacter arcticus (strain DSM 17307 / VKM B-2377 / 273-4).